A 323-amino-acid polypeptide reads, in one-letter code: Peroxisome biogenesis protein 20 (323 aa).

Cys8 participates in a covalent cross-link: Glycyl cysteine thioester (Cys-Gly) (interchain with G-Cter in ubiquitin). Lys19 participates in a covalent cross-link: Glycyl lysine isopeptide (Lys-Gly) (interchain with G-Cter in ubiquitin). 3 consecutive short sequence motifs (wxxxF/Y motif) follow at residues 89-93 (WSSEF), 102-105 (WVED), and 141-145 (WTQEF).

This sequence belongs to the peroxisomal targeting signal receptor family. Interacts (via WxxxF/Y and LVxEF motifs) with PEX14; promoting translocation through the PEX13-PEX14 docking complex. Interacts with PEX7. In terms of processing, monoubiquitinated at Cys-8 by PEX2 during PEX20 passage through the PEX2-PEX10-PEX12 retrotranslocation channel: monoubiquitination acts as a signal for PEX20 extraction and is required for proper export from peroxisomes and recycling. When PEX5 recycling is compromised, polyubiquitinated at Lys-19 by PEX10 during its passage through the retrotranslocation channel, leading to its degradation.

Its subcellular location is the cytoplasm. It localises to the cytosol. The protein localises to the peroxisome matrix. In terms of biological role, coreceptor required for the peroxisomal import of proteins containing a C-terminal PTS2-type peroxisomal targeting signal, such as 3-oxoacyl-CoA thiolase. Acts via its interaction with PEX7, promoting association between PEX7 bound to cargo proteins and the PEX13-PEX14 docking complex. PEX20 along with PEX7 and PTS2-containing cargo proteins are tranlocated into peroxisomes by passing through the PEX13-PEX14 docking complex. PEX20 coreceptor is then retrotranslocated into the cytosol, leading to release of bound cargo in the peroxisome matrix, and reset for a subsequent peroxisome import cycle. Also mediates peroxisomal import of proteins that do not contain PTS1- or PTS2-type peroxisomal targeting signals, such as acyl-CoA oxidases (Aox) izozymes. Import of acyl-CoA oxidases (Aox) izozymes is independent of PEX7. Required for PEX7 ubiquitination. This Komagataella pastoris (Yeast) protein is Peroxisome biogenesis protein 20.